The chain runs to 61 residues: MAKTSLKVKQQRTQKYQTREYSRCKICGRPHAYLRKFGICRICFRELAYKGQIPGVKKASW.

Residues Cys-24, Cys-27, Cys-40, and Cys-43 each coordinate Zn(2+).

It belongs to the universal ribosomal protein uS14 family. Zinc-binding uS14 subfamily. In terms of assembly, part of the 30S ribosomal subunit. Contacts proteins S3 and S10. The cofactor is Zn(2+).

Binds 16S rRNA, required for the assembly of 30S particles and may also be responsible for determining the conformation of the 16S rRNA at the A site. In Alkaliphilus oremlandii (strain OhILAs) (Clostridium oremlandii (strain OhILAs)), this protein is Small ribosomal subunit protein uS14.